The chain runs to 352 residues: MIETDKLAAPARVIAATPASSQEEAFERALRPKLLDEYVGQEKVRGQLDIFMHAARNRREALDHVLLFGPPGLGKTTLAHIIAREMGVNLRQTSGPVLERPGDLAALLTNLEANDVLFIDEIHRLSPVVEEILYPALEDYQIDIMIGEGPAARSVKLDLQPFTLVGATTRAGMLTNPLRDRFGIVARLEFYTADELARIVTRSAQLLHARIDPQGALEIARRARGTPRIANRLLRRVRDYAEVKGDGNITRAMADAALAMLDVDSVGFDLMDRKLLEAVLHKFGGGPVGVDNLAAAIGEERDTIEDVLEPYLIQQGYLQRTPRGRVATAAAYRHFGLANPQGSGASELFGDA.

Positions 4–191 (TDKLAAPARV…FGIVARLEFY (188 aa)) are large ATPase domain (RuvB-L). ATP is bound by residues Leu30, Arg31, Gly72, Lys75, Thr76, Thr77, 138-140 (EDY), Arg181, Tyr191, and Arg228. Position 76 (Thr76) interacts with Mg(2+). Positions 192-262 (TADELARIVT…MADAALAMLD (71 aa)) are small ATPAse domain (RuvB-S). The segment at 265-352 (SVGFDLMDRK…SGASELFGDA (88 aa)) is head domain (RuvB-H). The DNA site is built by Arg301, Arg320, and Arg325.

It belongs to the RuvB family. In terms of assembly, homohexamer. Forms an RuvA(8)-RuvB(12)-Holliday junction (HJ) complex. HJ DNA is sandwiched between 2 RuvA tetramers; dsDNA enters through RuvA and exits via RuvB. An RuvB hexamer assembles on each DNA strand where it exits the tetramer. Each RuvB hexamer is contacted by two RuvA subunits (via domain III) on 2 adjacent RuvB subunits; this complex drives branch migration. In the full resolvosome a probable DNA-RuvA(4)-RuvB(12)-RuvC(2) complex forms which resolves the HJ.

It localises to the cytoplasm. It carries out the reaction ATP + H2O = ADP + phosphate + H(+). Functionally, the RuvA-RuvB-RuvC complex processes Holliday junction (HJ) DNA during genetic recombination and DNA repair, while the RuvA-RuvB complex plays an important role in the rescue of blocked DNA replication forks via replication fork reversal (RFR). RuvA specifically binds to HJ cruciform DNA, conferring on it an open structure. The RuvB hexamer acts as an ATP-dependent pump, pulling dsDNA into and through the RuvAB complex. RuvB forms 2 homohexamers on either side of HJ DNA bound by 1 or 2 RuvA tetramers; 4 subunits per hexamer contact DNA at a time. Coordinated motions by a converter formed by DNA-disengaged RuvB subunits stimulates ATP hydrolysis and nucleotide exchange. Immobilization of the converter enables RuvB to convert the ATP-contained energy into a lever motion, pulling 2 nucleotides of DNA out of the RuvA tetramer per ATP hydrolyzed, thus driving DNA branch migration. The RuvB motors rotate together with the DNA substrate, which together with the progressing nucleotide cycle form the mechanistic basis for DNA recombination by continuous HJ branch migration. Branch migration allows RuvC to scan DNA until it finds its consensus sequence, where it cleaves and resolves cruciform DNA. This chain is Holliday junction branch migration complex subunit RuvB, found in Cupriavidus necator (strain ATCC 17699 / DSM 428 / KCTC 22496 / NCIMB 10442 / H16 / Stanier 337) (Ralstonia eutropha).